A 419-amino-acid polypeptide reads, in one-letter code: MPIFKKTLIVLSFIFLISILIYLNMYLFGTSTVGIYGVILITYLVIKLGLSFLYEPFKGKPHDYKVAAVIPSYNEDAESLLETLKSVLAQTYPLSEIYIVDDGSSNTDAIQLIEEYVNREVDICRNVIVHRSLVNKGKRHAQAWAFERSDADVFLTVDSDTYIYPNALEELLKSFNDETVYAATGHLNARNRQTNLLTRLTDIRYDNAFGVERAAQSLTGNILVCSGPLSIYRREVIIPNLERYKNQTFLGLPVSIGDDRCLTNYAIDLGRTVYQSTARCDTDVPFQLKSYLKQQNRWNKSFFRESIISVKKILSNPIVALWTIFEVVMFMMLIVAIGNLLFNQAIQLDLIKLFAFLSIIFIVALCRNVHYMVKHPASFLLSPLYGILHLFVLQPLKLYSLCTIKNTEWGTRKKVTIFK.

5 consecutive transmembrane segments (helical) span residues 8 to 28 (LIVL…MYLF), 33 to 53 (VGIY…LSFL), 318 to 338 (IVAL…VAIG), 345 to 365 (AIQL…IVAL), and 376 to 396 (PASF…LQPL).

Belongs to the NodC/HAS family. It depends on Mg(2+) as a cofactor.

The protein resides in the cell membrane. It catalyses the reaction [hyaluronan](n) + UDP-N-acetyl-alpha-D-glucosamine = N-acetyl-beta-D-glucosaminyl-(1-&gt;4)-[hyaluronan](n) + UDP + H(+). The catalysed reaction is N-acetyl-beta-D-glucosaminyl-(1-&gt;4)-[hyaluronan](n) + UDP-alpha-D-glucuronate = [hyaluronan](n+1) + UDP + H(+). It functions in the pathway glycan biosynthesis; hyaluronan biosynthesis. Glycosaminoglycan synthesis. The hyaluronic acid capsule is involved in the pathogenicity of group A Streptococci; it may be the major virulence determinant. This is Hyaluronan synthase (hasA) from Streptococcus pyogenes serotype M18 (strain MGAS8232).